We begin with the raw amino-acid sequence, 77 residues long: Defensin-like protein 4 (77 aa).

The first 30 residues, 1-30, serve as a signal peptide directing secretion; the sequence is MKFSMRLISAVLFLVMIFVATGMGPVTVEA. Disulfide bonds link Cys33-Cys77, Cys44-Cys64, Cys50-Cys71, and Cys54-Cys73.

The protein belongs to the DEFL family. Expressed in roots, siliques and seeds.

The protein resides in the secreted. Confers broad-spectrum resistance to pathogens. This is Defensin-like protein 4 (PDF2.1) from Arabidopsis thaliana (Mouse-ear cress).